A 264-amino-acid chain; its full sequence is Thymidylate synthase (264 aa).

Residue R21 participates in dUMP binding. (6R)-5,10-methylene-5,6,7,8-tetrahydrofolate is bound at residue H51. 126–127 provides a ligand contact to dUMP; the sequence is RR. The Nucleophile role is filled by C146. DUMP contacts are provided by residues 166 to 169, N177, and 207 to 209; these read RSCD and HLY. D169 is a (6R)-5,10-methylene-5,6,7,8-tetrahydrofolate binding site. Residue A263 participates in (6R)-5,10-methylene-5,6,7,8-tetrahydrofolate binding.

This sequence belongs to the thymidylate synthase family. Bacterial-type ThyA subfamily. As to quaternary structure, homodimer.

Its subcellular location is the cytoplasm. It carries out the reaction dUMP + (6R)-5,10-methylene-5,6,7,8-tetrahydrofolate = 7,8-dihydrofolate + dTMP. It participates in pyrimidine metabolism; dTTP biosynthesis. Functionally, catalyzes the reductive methylation of 2'-deoxyuridine-5'-monophosphate (dUMP) to 2'-deoxythymidine-5'-monophosphate (dTMP) while utilizing 5,10-methylenetetrahydrofolate (mTHF) as the methyl donor and reductant in the reaction, yielding dihydrofolate (DHF) as a by-product. This enzymatic reaction provides an intracellular de novo source of dTMP, an essential precursor for DNA biosynthesis. The protein is Thymidylate synthase of Hamiltonella defensa subsp. Acyrthosiphon pisum (strain 5AT).